A 515-amino-acid chain; its full sequence is SWI/SNF-related matrix-associated actin-dependent regulator of chromatin subfamily D member 1 (515 aa).

The segment at 1–103 (MAARAGFQSV…SGMDQSRKRP (103 aa)) is disordered. A compositionally biased stretch (gly residues) spans 14–23 (GGAGASGGAG). The tract at residues 43-167 (APGQGLYRSP…DQTIMRKRLD (125 aa)) is interaction with ESR1, NR1H4, NR3C1, PGR and SMARCA4. Asymmetric dimethylarginine occurs at positions 68 and 88. Residue lysine 101 forms a Glycyl lysine isopeptide (Lys-Gly) (interchain with G-Cter in SUMO2) linkage. Residues 168 to 474 (IQEALKRPIK…TMTDVVGNPE (307 aa)) are interaction with SMARCC1 and SMARCC2. Residues 180 to 515 (RKLRIFISNT…LEQALGIRNT (336 aa)) are necessary for GR/NR3C1-mediated remodeling and transcription from chromatin; required for GR/NR3C1 interaction with the BRG1/SMARCA4 complex in vivo. Threonine 203 bears the Phosphothreonine mark. N6-acetyllysine is present on lysine 223. The region spanning 290–367 (YQPPQFKLDP…PQRLHALLMP (78 aa)) is the SWIB/MDM2 domain. A coiled-coil region spans residues 412 to 440 (ASQQEIATLDNKIHETIETINQLKTQREF).

This sequence belongs to the SMARCD family. Component of the multiprotein chromatin-remodeling complexes SWI/SNF: SWI/SNF-A (BAF), SWI/SNF-B (PBAF) and related complexes. The canonical complex contains a catalytic subunit (either SMARCA4/BRG1/BAF190A or SMARCA2/BRM/BAF190B), and at least SMARCE1, ACTL6A/BAF53, SMARCC1/BAF155, SMARCC2/BAF170, and SMARCB1/SNF5/BAF47. Other subunits specific to each of the complexes may also be present permitting several possible combinations developmentally and tissue specific. Component of the BAF complex, which includes at least actin (ACTB), ARID1A/BAF250A, ARID1B/BAF250B, SMARCA2/BRM, SMARCA4/BRG1/BAF190A, ACTL6A/BAF53, ACTL6B/BAF53B, SMARCE1/BAF57, SMARCC1/BAF155, SMARCC2/BAF170, SMARCB1/SNF5/INI1, and one or more SMARCD1/BAF60A, SMARCD2/BAF60B, or SMARCD3/BAF60C. In muscle cells, the BAF complex also contains DPF3. Component of neural progenitors-specific chromatin remodeling complex (npBAF complex) composed of at least, ARID1A/BAF250A or ARID1B/BAF250B, SMARCD1/BAF60A, SMARCD3/BAF60C, SMARCA2/BRM/BAF190B, SMARCA4/BRG1/BAF190A, SMARCB1/BAF47, SMARCC1/BAF155, SMARCE1/BAF57, SMARCC2/BAF170, PHF10/BAF45A, ACTL6A/BAF53A and actin. Component of neuron-specific chromatin remodeling complex (nBAF complex) composed of at least, ARID1A/BAF250A or ARID1B/BAF250B, SMARCD1/BAF60A, SMARCD3/BAF60C, SMARCA2/BRM/BAF190B, SMARCA4/BRG1/BAF190A, SMARCB1/BAF47, SMARCC1/BAF155, SMARCE1/BAF57, SMARCC2/BAF170, DPF1/BAF45B, DPF3/BAF45C, ACTL6B/BAF53B and actin. Component of the SWI/SNF-B (PBAF) chromatin remodeling complex, at least composed of SMARCA4/BRG1, SMARCB1/BAF47/SNF5, ACTL6A/BAF53A or ACTL6B/BAF53B, SMARCE1/BAF57, SMARCD1/BAF60A, SMARCD2/BAF60B, perhaps SMARCD3/BAF60C, SMARCC1/BAF155, SMARCC2/BAF170, PBRM1/BAF180, ARID2/BAF200 and actin (ACTB). Component of SWI/SNF (GBAF) subcomplex, which includes at least BICRA or BICRAL (mutually exclusive), BRD9, SS18, SMARCA2/BRM, SMARCA4/BRG1/BAF190A, ACTL6A/BAF53, SMARCC1/BAF155, and SMARCD1/BAF60A. Specifically interacts with the VDR heterodimer complex. Interacts with ESR1, NR3C1, NR1H4, PGR, SMARCA4, SMARCC1 and SMARCC2. Interacts with DPF2. Interacts with DPF3a (isoform 2 of DPF3/BAF45C) and with HDGFL2 in a DPF3a-dependent manner. Interacts with FOS, FOSB isoform 1 and 2, FOSL1 and FOSL2. Expressed in all tissues tested, including brain, heart, kidney, liver, lung, muscle, pancreas and placenta.

It localises to the nucleus. In terms of biological role, involved in transcriptional activation and repression of select genes by chromatin remodeling (alteration of DNA-nucleosome topology). Component of SWI/SNF chromatin remodeling complexes that carry out key enzymatic activities, changing chromatin structure by altering DNA-histone contacts within a nucleosome in an ATP-dependent manner. Belongs to the neural progenitors-specific chromatin remodeling complex (npBAF complex) and the neuron-specific chromatin remodeling complex (nBAF complex). During neural development a switch from a stem/progenitor to a postmitotic chromatin remodeling mechanism occurs as neurons exit the cell cycle and become committed to their adult state. The transition from proliferating neural stem/progenitor cells to postmitotic neurons requires a switch in subunit composition of the npBAF and nBAF complexes. As neural progenitors exit mitosis and differentiate into neurons, npBAF complexes which contain ACTL6A/BAF53A and PHF10/BAF45A, are exchanged for homologous alternative ACTL6B/BAF53B and DPF1/BAF45B or DPF3/BAF45C subunits in neuron-specific complexes (nBAF). The npBAF complex is essential for the self-renewal/proliferative capacity of the multipotent neural stem cells. The nBAF complex along with CREST plays a role regulating the activity of genes essential for dendrite growth. Has a strong influence on vitamin D-mediated transcriptional activity from an enhancer vitamin D receptor element (VDRE). May be a link between mammalian SWI-SNF-like chromatin remodeling complexes and the vitamin D receptor (VDR) heterodimer. Mediates critical interactions between nuclear receptors and the BRG1/SMARCA4 chromatin-remodeling complex for transactivation. Interacts with AKIRIN2. The protein is SWI/SNF-related matrix-associated actin-dependent regulator of chromatin subfamily D member 1 of Homo sapiens (Human).